The following is a 163-amino-acid chain: Large ribosomal subunit protein uL10 (163 aa).

This sequence belongs to the universal ribosomal protein uL10 family. In terms of assembly, part of the ribosomal stalk of the 50S ribosomal subunit. The N-terminus interacts with L11 and the large rRNA to form the base of the stalk. The C-terminus forms an elongated spine to which L12 dimers bind in a sequential fashion forming a multimeric L10(L12)X complex.

In terms of biological role, forms part of the ribosomal stalk, playing a central role in the interaction of the ribosome with GTP-bound translation factors. The polypeptide is Large ribosomal subunit protein uL10 (Haemophilus influenzae (strain PittGG)).